Consider the following 72-residue polypeptide: MAKEDTIQMQGEILETLPNATFKVKLENDHIVLGHISGKMRMHYIRISPGDKVTVELTPYDLTRARIVFRAR.

Positions methionine 1–arginine 72 constitute an S1-like domain.

The protein belongs to the IF-1 family. In terms of assembly, component of the 30S ribosomal translation pre-initiation complex which assembles on the 30S ribosome in the order IF-2 and IF-3, IF-1 and N-formylmethionyl-tRNA(fMet); mRNA recruitment can occur at any time during PIC assembly.

The protein localises to the cytoplasm. In terms of biological role, one of the essential components for the initiation of protein synthesis. Stabilizes the binding of IF-2 and IF-3 on the 30S subunit to which N-formylmethionyl-tRNA(fMet) subsequently binds. Helps modulate mRNA selection, yielding the 30S pre-initiation complex (PIC). Upon addition of the 50S ribosomal subunit IF-1, IF-2 and IF-3 are released leaving the mature 70S translation initiation complex. In Neisseria gonorrhoeae (strain ATCC 700825 / FA 1090), this protein is Translation initiation factor IF-1.